The primary structure comprises 92 residues: Long neurotoxin 3FTx-Oxy1 (92 aa).

The signal sequence occupies residues 1–21 (MKTLLLTLVVVTIVCLDLGYT). 5 disulfides stabilise this stretch: Cys24-Cys42, Cys35-Cys63, Cys48-Cys52, Cys67-Cys79, and Cys80-Cys85.

It belongs to the three-finger toxin family. Long-chain subfamily. Type II alpha-neurotoxin sub-subfamily. Expressed by the venom gland.

Its subcellular location is the secreted. Binds with high affinity to muscular (alpha-1/CHRNA1) and neuronal (alpha-7/CHRNA7) nicotinic acetylcholine receptor (nAChR) and inhibits acetylcholine from binding to the receptor, thereby impairing neuromuscular and neuronal transmission. In Oxyuranus microlepidotus (Inland taipan), this protein is Long neurotoxin 3FTx-Oxy1.